Consider the following 214-residue polypeptide: Small ribosomal subunit protein uS5 (214 aa).

Residues 54-117 (LKYEVVDIKV…RDAKMNILPV (64 aa)) enclose the S5 DRBM domain.

This sequence belongs to the universal ribosomal protein uS5 family. In terms of assembly, part of the 30S ribosomal subunit. Contacts protein S4.

In terms of biological role, with S4 and S12 plays an important role in translational accuracy. The protein is Small ribosomal subunit protein uS5 of Saccharolobus islandicus (strain Y.N.15.51 / Yellowstone #2) (Sulfolobus islandicus).